The primary structure comprises 183 residues: Ribosome-recycling factor (183 aa).

This sequence belongs to the RRF family.

The protein resides in the cytoplasm. Its function is as follows. Responsible for the release of ribosomes from messenger RNA at the termination of protein biosynthesis. May increase the efficiency of translation by recycling ribosomes from one round of translation to another. The protein is Ribosome-recycling factor of Deinococcus radiodurans (strain ATCC 13939 / DSM 20539 / JCM 16871 / CCUG 27074 / LMG 4051 / NBRC 15346 / NCIMB 9279 / VKM B-1422 / R1).